Here is a 196-residue protein sequence, read N- to C-terminus: Endoribonuclease YbeY (196 aa).

The Zn(2+) site is built by histidine 120, histidine 124, and histidine 130.

Belongs to the endoribonuclease YbeY family. Zn(2+) is required as a cofactor.

It is found in the cytoplasm. Its function is as follows. Single strand-specific metallo-endoribonuclease involved in late-stage 70S ribosome quality control and in maturation of the 3' terminus of the 16S rRNA. In Corynebacterium glutamicum (strain R), this protein is Endoribonuclease YbeY.